The sequence spans 360 residues: Alanine racemase (360 aa).

Lys-33 serves as the catalytic Proton acceptor; specific for D-alanine. Residue Lys-33 is modified to N6-(pyridoxal phosphate)lysine. Arg-129 lines the substrate pocket. Catalysis depends on Tyr-253, which acts as the Proton acceptor; specific for L-alanine. Position 301 (Met-301) interacts with substrate.

The protein belongs to the alanine racemase family. The cofactor is pyridoxal 5'-phosphate.

The catalysed reaction is L-alanine = D-alanine. It participates in amino-acid biosynthesis; D-alanine biosynthesis; D-alanine from L-alanine: step 1/1. Functionally, catalyzes the interconversion of L-alanine and D-alanine. May also act on other amino acids. This is Alanine racemase (alr) from Xanthomonas campestris pv. campestris (strain 8004).